Here is a 204-residue protein sequence, read N- to C-terminus: Large ribosomal subunit protein uL4 (204 aa).

Residues 53 to 74 form a disordered region; it reads AYVSGGGKKPWRQKGRGGARAG.

The protein belongs to the universal ribosomal protein uL4 family. As to quaternary structure, part of the 50S ribosomal subunit.

In terms of biological role, one of the primary rRNA binding proteins, this protein initially binds near the 5'-end of the 23S rRNA. It is important during the early stages of 50S assembly. It makes multiple contacts with different domains of the 23S rRNA in the assembled 50S subunit and ribosome. Functionally, forms part of the polypeptide exit tunnel. This Campylobacter curvus (strain 525.92) protein is Large ribosomal subunit protein uL4.